Consider the following 177-residue polypeptide: Probable DNA-directed RNA polymerase subunit delta (177 aa).

The HTH HARE-type domain maps to 14 to 81; sequence CSMIEVVHSV…GENRWGLRSW (68 aa). The disordered stretch occupies residues 91 to 177; it reads ILPQPKPKKK…DETEEEEEEL (87 aa). Positions 106–177 are enriched in acidic residues; the sequence is DGFDDYIEED…DETEEEEEEL (72 aa).

The protein belongs to the RpoE family. As to quaternary structure, RNAP is composed of a core of 2 alpha, a beta and a beta' subunits. The core is associated with a delta subunit and one of several sigma factors.

In terms of biological role, participates in both the initiation and recycling phases of transcription. In the presence of the delta subunit, RNAP displays an increased specificity of transcription, a decreased affinity for nucleic acids, and an increased efficiency of RNA synthesis because of enhanced recycling. In Bacillus cereus (strain G9842), this protein is Probable DNA-directed RNA polymerase subunit delta.